Here is a 281-residue protein sequence, read N- to C-terminus: Bifunctional protein FolD (281 aa).

NADP(+) contacts are provided by residues 164–166, serine 189, and threonine 230; that span reads GRS.

Belongs to the tetrahydrofolate dehydrogenase/cyclohydrolase family. In terms of assembly, homodimer.

The enzyme catalyses (6R)-5,10-methylene-5,6,7,8-tetrahydrofolate + NADP(+) = (6R)-5,10-methenyltetrahydrofolate + NADPH. It carries out the reaction (6R)-5,10-methenyltetrahydrofolate + H2O = (6R)-10-formyltetrahydrofolate + H(+). It functions in the pathway one-carbon metabolism; tetrahydrofolate interconversion. Its function is as follows. Catalyzes the oxidation of 5,10-methylenetetrahydrofolate to 5,10-methenyltetrahydrofolate and then the hydrolysis of 5,10-methenyltetrahydrofolate to 10-formyltetrahydrofolate. The protein is Bifunctional protein FolD of Dictyoglomus turgidum (strain DSM 6724 / Z-1310).